Reading from the N-terminus, the 258-residue chain is Imidazole glycerol phosphate synthase subunit HisF (258 aa).

Residues D11 and D130 contribute to the active site.

The protein belongs to the HisA/HisF family. As to quaternary structure, heterodimer of HisH and HisF.

It is found in the cytoplasm. The enzyme catalyses 5-[(5-phospho-1-deoxy-D-ribulos-1-ylimino)methylamino]-1-(5-phospho-beta-D-ribosyl)imidazole-4-carboxamide + L-glutamine = D-erythro-1-(imidazol-4-yl)glycerol 3-phosphate + 5-amino-1-(5-phospho-beta-D-ribosyl)imidazole-4-carboxamide + L-glutamate + H(+). Its pathway is amino-acid biosynthesis; L-histidine biosynthesis; L-histidine from 5-phospho-alpha-D-ribose 1-diphosphate: step 5/9. Its function is as follows. IGPS catalyzes the conversion of PRFAR and glutamine to IGP, AICAR and glutamate. The HisF subunit catalyzes the cyclization activity that produces IGP and AICAR from PRFAR using the ammonia provided by the HisH subunit. The protein is Imidazole glycerol phosphate synthase subunit HisF of Cronobacter sakazakii (strain ATCC BAA-894) (Enterobacter sakazakii).